The following is a 209-amino-acid chain: ADP-ribose pyrophosphatase (209 aa).

Substrate contacts are provided by residues 28-29, 51-52, R56, and R79; these read FF and RE. A Nudix hydrolase domain is found at 55–193; the sequence is ERGHAAVLLP…KIDNAASVIA (139 aa). Mg(2+) is bound at residue A96. The short motif at 97-118 is the Nudix box element; it reads GMIEEGESVEDVARREAIEEAG. M98 contributes to the substrate binding site. Residues E112 and E116 each contribute to the Mg(2+) site. Substrate contacts are provided by residues 133 to 135 and E139; that span reads SPG. Residue E162 is the Proton acceptor of the active site. Residue E164 coordinates Mg(2+).

Belongs to the Nudix hydrolase family. NudF subfamily. In terms of assembly, homodimer. It depends on Mg(2+) as a cofactor.

The enzyme catalyses ADP-D-ribose + H2O = D-ribose 5-phosphate + AMP + 2 H(+). Inhibited by phosphorylated compounds such as AMP, ADP, ATP, 3-phosphoglyceric acid and PPi. Not inhibited by orthophosphate. Activity is high in cells grown in low glucose concentrations and decreases dramatically as glucose concentration increases. Acts on ADP-mannose and ADP-glucose as well as ADP-ribose. Prevents glycogen biosynthesis. The reaction catalyzed by this enzyme is a limiting step of the gluconeogenic process. The chain is ADP-ribose pyrophosphatase (nudF) from Escherichia coli O157:H7.